A 49-amino-acid polypeptide reads, in one-letter code: Large ribosomal subunit protein bL33B (49 aa).

This sequence belongs to the bacterial ribosomal protein bL33 family.

In Bacillus velezensis (strain DSM 23117 / BGSC 10A6 / LMG 26770 / FZB42) (Bacillus amyloliquefaciens subsp. plantarum), this protein is Large ribosomal subunit protein bL33B.